The following is a 193-amino-acid chain: ER membrane protein complex subunit 4 (193 aa).

A run of 2 helical transmembrane segments spans residues 91-111 (ILAYMSGNSLQIFSIMTTLML) and 137-157 (LWPAMGAYILFQLLLMGIGVY).

This sequence belongs to the EMC4 family.

It localises to the endoplasmic reticulum membrane. This is ER membrane protein complex subunit 4 from Schizosaccharomyces pombe (strain 972 / ATCC 24843) (Fission yeast).